A 143-amino-acid polypeptide reads, in one-letter code: Transcription antitermination protein NusB (143 aa).

It belongs to the NusB family.

Involved in transcription antitermination. Required for transcription of ribosomal RNA (rRNA) genes. Binds specifically to the boxA antiterminator sequence of the ribosomal RNA (rrn) operons. This Desulforapulum autotrophicum (strain ATCC 43914 / DSM 3382 / VKM B-1955 / HRM2) (Desulfobacterium autotrophicum) protein is Transcription antitermination protein NusB.